Consider the following 356-residue polypeptide: Phosphoribosylformylglycinamidine cyclo-ligase (356 aa).

It belongs to the AIR synthase family.

Its subcellular location is the cytoplasm. It carries out the reaction 2-formamido-N(1)-(5-O-phospho-beta-D-ribosyl)acetamidine + ATP = 5-amino-1-(5-phospho-beta-D-ribosyl)imidazole + ADP + phosphate + H(+). It functions in the pathway purine metabolism; IMP biosynthesis via de novo pathway; 5-amino-1-(5-phospho-D-ribosyl)imidazole from N(2)-formyl-N(1)-(5-phospho-D-ribosyl)glycinamide: step 2/2. This is Phosphoribosylformylglycinamidine cyclo-ligase from Sinorhizobium fredii (strain NBRC 101917 / NGR234).